A 594-amino-acid chain; its full sequence is Grainyhead-like protein 3 homolog (594 aa).

Transcription activation stretches follow at residues 25-75 and 28-91; these read NDDE…RIIT and EAWS…SCIE. Residues 220–453 form the Grh/CP2 DB domain; the sequence is ANRDFECTLE…DMETHPVLFI (234 aa). Residues 483 to 503 are disordered; it reads SSQSFPESFEAPPSKQQTNED.

Belongs to the grh/CP2 family. Grainyhead subfamily.

Its subcellular location is the nucleus. Transcription factor playing important roles in primary neurulation and in the differentiation of stratified epithelia of both ectodermal and endodermal origin. Binds directly to the consensus DNA sequence 5'-AACCGGTT-3' acting as an activator and repressor on distinct target genes. The chain is Grainyhead-like protein 3 homolog (grhl3) from Xenopus tropicalis (Western clawed frog).